The sequence spans 63 residues: Small ribosomal subunit protein eS27 (63 aa).

Residues Cys-18, Cys-21, Cys-37, and Cys-40 each coordinate Zn(2+). The C4-type zinc-finger motif lies at Cys-18 to Cys-40.

Belongs to the eukaryotic ribosomal protein eS27 family. In terms of assembly, part of the 30S ribosomal subunit. Zn(2+) serves as cofactor.

The polypeptide is Small ribosomal subunit protein eS27 (Methanothermobacter thermautotrophicus (strain ATCC 29096 / DSM 1053 / JCM 10044 / NBRC 100330 / Delta H) (Methanobacterium thermoautotrophicum)).